A 695-amino-acid chain; its full sequence is Cysteine-rich receptor-like protein kinase 6 (695 aa).

The N-terminal stretch at 1 to 31 (MRRHRPYLDGVAAAAATFLLAVLLHAPLAAG) is a signal peptide. At 32-294 (EDEPPPWVLC…ATSGEKTKNR (263 aa)) the chain is on the extracellular side. 2 consecutive Gnk2-homologous domains span residues 38–142 (WVLC…NRDF) and 151–261 (TTYT…VFPF). 4 N-linked (GlcNAc...) asparagine glycosylation sites follow: N49, N53, N70, and N101. 2 disulfides stabilise this stretch: C96-C105 and C108-C133. The N-linked (GlcNAc...) asparagine glycan is linked to N178. Cystine bridges form between C215/C224 and C227/C252. A helical membrane pass occupies residues 295–315 (IGTVLAIVMPAIAAILLMVVA). Over 316–695 (CFCCWKRIKK…DLSITELVPR (380 aa)) the chain is Cytoplasmic. One can recognise a Protein kinase domain in the interval 363 to 634 (FADTKMIGQG…PTISSVNIML (272 aa)). ATP is bound by residues 369-377 (IGQGGFGMV) and K391. D488 functions as the Proton acceptor in the catalytic mechanism. The segment at 658-682 (DSSNPYSERYPRPRHSGYSDNSTVV) is disordered.

This sequence belongs to the protein kinase superfamily. Ser/Thr protein kinase family. CRK subfamily.

The protein localises to the membrane. Involved in disease resistance. Required for NPR1/NH1-mediated immunity to the bacterial blight pathogen Xanthomomas oryzae pv. oryzae (Xoo). Required for the benzothiadiazole (BTH)-induced immune response. Possesses kinase activity in vitro. This chain is Cysteine-rich receptor-like protein kinase 6, found in Oryza sativa subsp. japonica (Rice).